The following is a 74-amino-acid chain: Acyl carrier protein (74 aa).

A Carrier domain is found at 1–73 (MAVFEKVQEI…DLVAYVEEQA (73 aa)). Residue serine 35 is modified to O-(pantetheine 4'-phosphoryl)serine.

It belongs to the acyl carrier protein (ACP) family. In terms of processing, 4'-phosphopantetheine is transferred from CoA to a specific serine of apo-ACP by AcpS. This modification is essential for activity because fatty acids are bound in thioester linkage to the sulfhydryl of the prosthetic group.

The protein resides in the cytoplasm. It functions in the pathway lipid metabolism; fatty acid biosynthesis. In terms of biological role, carrier of the growing fatty acid chain in fatty acid biosynthesis. The chain is Acyl carrier protein from Streptococcus pneumoniae serotype 4 (strain ATCC BAA-334 / TIGR4).